A 308-amino-acid polypeptide reads, in one-letter code: Eukaryotic translation initiation factor 3 subunit G-B (308 aa).

Disordered regions lie at residues 1 to 35 and 176 to 227; these read MPTG…KQDP and STAD…DDNA. A compositionally biased stretch (low complexity) spans 185–194; sequence GAEPEPAQAP. Residues 209–227 are compositionally biased toward basic and acidic residues; sequence GGSRRGESMQPNRRADDNA. The RRM domain occupies 227 to 305; it reads ATIRVTNLSE…LILNVEWAKP (79 aa).

The protein belongs to the eIF-3 subunit G family. In terms of assembly, component of the eukaryotic translation initiation factor 3 (eIF-3) complex, which is composed of 13 subunits: eif3a, eif3b, eif3c, eif3d, eif3e, eif3f, eif3g, eif3h, eif3i, eif3j, eif3k, eif3l and eif3m.

Its subcellular location is the cytoplasm. RNA-binding component of the eukaryotic translation initiation factor 3 (eIF-3) complex, which is involved in protein synthesis of a specialized repertoire of mRNAs and, together with other initiation factors, stimulates binding of mRNA and methionyl-tRNAi to the 40S ribosome. The eIF-3 complex specifically targets and initiates translation of a subset of mRNAs involved in cell proliferation. This subunit can bind 18S rRNA. This Xenopus laevis (African clawed frog) protein is Eukaryotic translation initiation factor 3 subunit G-B (eif3g-b).